Here is a 129-residue protein sequence, read N- to C-terminus: Small ribosomal subunit protein uS11 (129 aa).

It belongs to the universal ribosomal protein uS11 family. Part of the 30S ribosomal subunit. Interacts with proteins S7 and S18. Binds to IF-3.

Located on the platform of the 30S subunit, it bridges several disparate RNA helices of the 16S rRNA. Forms part of the Shine-Dalgarno cleft in the 70S ribosome. This is Small ribosomal subunit protein uS11 from Bartonella henselae (strain ATCC 49882 / DSM 28221 / CCUG 30454 / Houston 1) (Rochalimaea henselae).